A 204-amino-acid chain; its full sequence is N-(5'-phosphoribosyl)anthranilate isomerase (204 aa).

Belongs to the TrpF family.

It catalyses the reaction N-(5-phospho-beta-D-ribosyl)anthranilate = 1-(2-carboxyphenylamino)-1-deoxy-D-ribulose 5-phosphate. It participates in amino-acid biosynthesis; L-tryptophan biosynthesis; L-tryptophan from chorismate: step 3/5. The sequence is that of N-(5'-phosphoribosyl)anthranilate isomerase from Bacillus thuringiensis (strain Al Hakam).